Reading from the N-terminus, the 407-residue chain is Ribosomal protein uL3-like (407 aa).

Residues 1–31 are compositionally biased toward basic residues; sequence MSHRKFSAPRHGHLGFLPHKRSHRHRGKVKT. 2 disordered regions span residues 1–35 and 387–407; these read MSHR…WPRD and AFMG…SGDL.

This sequence belongs to the universal ribosomal protein uL3 family. In terms of assembly, component of the large ribosomal subunit in striated muscle cells.

In terms of biological role, heart- and skeletal muscle-specific component of the ribosome, which regulates muscle function. Component of the large ribosomal subunit in striated muscle cells: replaces the RPL3 paralog in the ribosome in these cells. The ribosome is a large ribonucleoprotein complex responsible for the synthesis of proteins in the cell. Inhibits myotube growth and muscle function. The sequence is that of Ribosomal protein uL3-like from Homo sapiens (Human).